A 520-amino-acid chain; its full sequence is Mitogen-activated protein kinase kinase 3 (520 aa).

At Ser69 the chain carries Phosphoserine. A Protein kinase domain is found at 83–339; sequence MRVFGAIGSG…ADQLLSHPFI (257 aa). ATP contacts are provided by residues 89–97 and Lys112; that span reads IGSGASSVV. The Proton acceptor role is filled by Asp207. Phosphoserine is present on Ser235. Residues Thr241 and Thr245 each carry the phosphothreonine modification. The 151-residue stretch at 366–516 folds into the NTF2 domain; the sequence is LADMLTIHYY…YFLAKQELYI (151 aa).

This sequence belongs to the protein kinase superfamily. STE Ser/Thr protein kinase family. MAP kinase kinase subfamily. Interacts with MPK1, MPK2 and MPK7. Interacts with P.syringae type III effector HopF2. Interacts with MPK14. Binds to MAPKKK17 and MAPKKK18. Binds to MAPKKK20. Post-translationally, phosphorylation at Ser-235 and Thr-241 by MAP kinase kinase kinases positively regulates kinase activity. Phosphorylated by MAPKKK20. Mostly expressed in leaves, and, to a lower extent, in roots, seedlings, flower buds, flowers and siliques.

Its subcellular location is the nucleus. The protein resides in the cytoplasm. The catalysed reaction is L-seryl-[protein] + ATP = O-phospho-L-seryl-[protein] + ADP + H(+). It carries out the reaction L-threonyl-[protein] + ATP = O-phospho-L-threonyl-[protein] + ADP + H(+). It catalyses the reaction L-tyrosyl-[protein] + ATP = O-phospho-L-tyrosyl-[protein] + ADP + H(+). Functionally, MKK3-MPK6 module plays an important role in the jasmonate signal transduction pathway through the negative regulation of MYC2/JIN1 expression. Activates by phosphorylation the downstream MPK6, MPK7 and MPK8. MKK3-MPK7 module acts as a positive regulator of PR1 gene expression. MKK3-MPK8 module negatively regulates ROS accumulation through controlling expression of the RBOHD gene. Component of the abscisic acid (ABA) signaling pathway that may act as ABA signal transducer in the context of abiotic stresses. Activator of the C group MAP kinases. Activates MPK7 in response to ABA. Mitogen-activated protein kinase (MAPK) that is specifically regulated by MAPKKK20 and mediates signaling that regulates cortical microtubule functions. In Arabidopsis thaliana (Mouse-ear cress), this protein is Mitogen-activated protein kinase kinase 3.